The primary structure comprises 570 residues: Glutamate--tRNA ligase (570 aa).

A 'HIGH' region motif is present at residues 107–117 (PNPDFVLHLGS).

Belongs to the class-I aminoacyl-tRNA synthetase family. Glutamate--tRNA ligase type 2 subfamily.

It is found in the cytoplasm. It catalyses the reaction tRNA(Glu) + L-glutamate + ATP = L-glutamyl-tRNA(Glu) + AMP + diphosphate. In terms of biological role, catalyzes the attachment of glutamate to tRNA(Glu) in a two-step reaction: glutamate is first activated by ATP to form Glu-AMP and then transferred to the acceptor end of tRNA(Glu). In Pyrobaculum aerophilum (strain ATCC 51768 / DSM 7523 / JCM 9630 / CIP 104966 / NBRC 100827 / IM2), this protein is Glutamate--tRNA ligase.